The primary structure comprises 645 residues: Cyclic nucleotide-gated channel rod photoreceptor subunit alpha (645 aa).

Residues 1-121 (MKVGVIETHH…PAGNMYYNWL (121 aa)) lie on the Cytoplasmic side of the membrane. The disordered stretch occupies residues 53 to 100 (NNNSNKDEEKKKKKEKKSKSENKKDGERQKNKEKKEKHKNKDKKKGKE). Positions 70–86 (SKSENKKDGERQKNKEK) are enriched in basic and acidic residues. Positions 87-96 (KEKHKNKDKK) are enriched in basic residues. A helical transmembrane segment spans residues 122–143 (FCITMPVMYNWTMIIARACFDE). Over 144–153 (LQNDYLAVWF) the chain is Extracellular. A helical membrane pass occupies residues 154–174 (IVDYVSDVIYIADMFVRTRTG). Residues 175–199 (YLEQGLLVKEEQKLKEKYKSSLQFK) are Cytoplasmic-facing. The helical transmembrane segment at 200 to 218 (LDFLSIIPTDLLYFKLGLN) threads the bilayer. Topologically, residues 219-223 (YPELR) are extracellular. The helical transmembrane segment at 224-242 (INRLLRVARMFEFFQRTET) threads the bilayer. The Cytoplasmic segment spans residues 243–249 (RTNYPNI). A helical membrane pass occupies residues 250-273 (FRISNLVMYIVIIIHWNACVYYSI). Residues 274-296 (SKAIGFGADTWVYPNTSHPEFAR) lie on the Extracellular side of the membrane. Transmembrane regions (helical) follow at residues 297–331 (LTRKYVYSLYWSTLTLTTIGETPPPVRDSEYFFVV) and 332–356 (VDFLVGVLIFATIVGNVGSMISNMN). Over 357 to 645 (AARAEFQAKI…TDKPGVTKTE (289 aa)) the chain is Cytoplasmic. 3',5'-cyclic GMP is bound by residues 439–561 (LLVE…DGLL), glutamate 498, and arginine 513.

Belongs to the cyclic nucleotide-gated cation channel (TC 1.A.1.5) family.

Its subcellular location is the membrane. Its function is as follows. Visual signal transduction is mediated by a G-protein coupled cascade using cGMP as second messenger. This protein can be activated by cGMP which leads to an opening of the cation channel and thereby causing a depolarization of rod photoreceptors. The polypeptide is Cyclic nucleotide-gated channel rod photoreceptor subunit alpha (Gallus gallus (Chicken)).